The chain runs to 541 residues: ATP synthase subunit beta (541 aa).

Residues 1-65 (MAKAVTSSKG…TPVKKEERAK (65 aa)) form a disordered region. Composition is skewed to basic and acidic residues over residues 25 to 36 (VKKDASKSKDAS) and 52 to 65 (AAKD…ERAK). ATP is bound at residue 214–221 (GGAGVGKT).

This sequence belongs to the ATPase alpha/beta chains family. As to quaternary structure, F-type ATPases have 2 components, CF(1) - the catalytic core - and CF(0) - the membrane proton channel. CF(1) has five subunits: alpha(3), beta(3), gamma(1), delta(1), epsilon(1). CF(0) has three main subunits: a(1), b(2) and c(9-12). The alpha and beta chains form an alternating ring which encloses part of the gamma chain. CF(1) is attached to CF(0) by a central stalk formed by the gamma and epsilon chains, while a peripheral stalk is formed by the delta and b chains.

Its subcellular location is the cell inner membrane. It carries out the reaction ATP + H2O + 4 H(+)(in) = ADP + phosphate + 5 H(+)(out). Its function is as follows. Produces ATP from ADP in the presence of a proton gradient across the membrane. The catalytic sites are hosted primarily by the beta subunits. The protein is ATP synthase subunit beta of Bartonella tribocorum (strain CIP 105476 / IBS 506).